The chain runs to 515 residues: uncharacterized protein (515 aa).

Positions Ser146 to Gln171 are disordered. The span at Glu148–Asn162 shows a compositional bias: basic and acidic residues.

The protein resides in the cytoplasm. The protein localises to the nucleus. This is an uncharacterized protein from Schizosaccharomyces pombe (strain 972 / ATCC 24843) (Fission yeast).